The chain runs to 725 residues: FYVE, RhoGEF and PH domain-containing protein 3 (725 aa).

The tract at residues 1–151 is disordered; it reads MESGRGSSTP…KADKDAGLAQ (151 aa). A compositionally biased stretch (acidic residues) spans 124–136; the sequence is EEADSDVGEEPDS. At Ser-128 the chain carries Phosphoserine. Residues 157 to 341 enclose the DH domain; that stretch reads KLLHIAQELL…STAANHSNAA (185 aa). Positions 370-469 constitute a PH 1 domain; sequence ELIKEGQIQK…WIQIIQATIE (100 aa). The interval 487 to 532 is disordered; sequence QDEDPSLSPDMPITSTSPVEPVVTTEGSSGAAGLEPRKLSSKTRRD. Residues 500-512 show a composition bias toward low complexity; that stretch reads TSTSPVEPVVTTE. A compositionally biased stretch (basic and acidic residues) spans 521-532; the sequence is EPRKLSSKTRRD. An FYVE-type zinc finger spans residues 532–588; sequence DKEKQSCKSCGETFNSITKRRHHCKLCGAVICGKCSEFKAENSRQSRVCRDCFLTQP. Residues Cys-538, Cys-541, Cys-555, Cys-558, Cys-563, Cys-566, Cys-580, and Cys-583 each coordinate Zn(2+). Residues 604–703 form the PH 2 domain; the sequence is PSLLCGPLRL…WLETLSTAAH (100 aa). Residues 703-725 form a disordered region; sequence HGDTAQDSPGALQLQVPMGAAAP.

Its subcellular location is the cytoplasm. It localises to the cytoskeleton. Its function is as follows. Promotes the formation of filopodia. May activate CDC42, a member of the Ras-like family of Rho- and Rac proteins, by exchanging bound GDP for free GTP. Plays a role in regulating the actin cytoskeleton and cell shape. This Homo sapiens (Human) protein is FYVE, RhoGEF and PH domain-containing protein 3 (FGD3).